The primary structure comprises 114 residues: Large ribosomal subunit protein bL19 (114 aa).

The protein belongs to the bacterial ribosomal protein bL19 family.

In terms of biological role, this protein is located at the 30S-50S ribosomal subunit interface and may play a role in the structure and function of the aminoacyl-tRNA binding site. This chain is Large ribosomal subunit protein bL19 (rplS), found in Listeria monocytogenes serovar 1/2a (strain ATCC BAA-679 / EGD-e).